We begin with the raw amino-acid sequence, 171 residues long: Galectin-related protein (171 aa).

Residues proline 38–leucine 170 form the Galectin domain.

Functionally, does not bind lactose, and may not bind carbohydrates. The protein is Galectin-related protein (lgalsl) of Xenopus tropicalis (Western clawed frog).